The following is a 361-amino-acid chain: 3-dehydroquinate synthase (361 aa).

NAD(+) contacts are provided by residues 71-76 (DGEQFK), 105-109 (GVIGD), 129-130 (TT), Lys142, Lys151, and 169-172 (CLQT). Zn(2+) contacts are provided by Glu184, His247, and His264.

It belongs to the sugar phosphate cyclases superfamily. Dehydroquinate synthase family. Co(2+) is required as a cofactor. The cofactor is Zn(2+). NAD(+) serves as cofactor.

Its subcellular location is the cytoplasm. It catalyses the reaction 7-phospho-2-dehydro-3-deoxy-D-arabino-heptonate = 3-dehydroquinate + phosphate. The protein operates within metabolic intermediate biosynthesis; chorismate biosynthesis; chorismate from D-erythrose 4-phosphate and phosphoenolpyruvate: step 2/7. Its function is as follows. Catalyzes the conversion of 3-deoxy-D-arabino-heptulosonate 7-phosphate (DAHP) to dehydroquinate (DHQ). This chain is 3-dehydroquinate synthase, found in Edwardsiella ictaluri (strain 93-146).